Reading from the N-terminus, the 73-residue chain is Large ribosomal subunit protein bL31 (73 aa).

Zn(2+) contacts are provided by cysteine 16, cysteine 18, cysteine 37, and cysteine 40.

This sequence belongs to the bacterial ribosomal protein bL31 family. Type A subfamily. Part of the 50S ribosomal subunit. The cofactor is Zn(2+).

Binds the 23S rRNA. The protein is Large ribosomal subunit protein bL31 of Hamiltonella defensa subsp. Acyrthosiphon pisum (strain 5AT).